A 261-amino-acid chain; its full sequence is MWFLILFLALSLGGIDAAPPLQSRVVGGFNCKKNSQPWQVAVYYQKEHICGGVLLDRNWVLTAAHCYVDQYEVWLGKNKLFQEEPSAQHRLVSKSFPHPGFNMSLLMLQTIPPGADFSNDLMLLRLSKPADITDVVKPIALPTKEPKPGSKCLASGWGSITPTRWQKPDDLQCVFITLLPNENCAKVYLQKVTDVMLCAGEMGGGKDTCRDDSGGPLICDGILQGTTSYGPVPCGKPGVPAIYTNLIKFNSWIKDTMMKNA.

Positions 1-16 are cleaved as a signal peptide; it reads MWFLILFLALSLGGID. Residues 17 to 24 constitute a propeptide, activation peptide; the sequence is AAPPLQSR. Residues 25 to 258 form the Peptidase S1 domain; sequence VVGGFNCKKN…FNSWIKDTMM (234 aa). Cystine bridges form between cysteine 31–cysteine 173, cysteine 50–cysteine 66, cysteine 152–cysteine 219, cysteine 184–cysteine 198, and cysteine 209–cysteine 234. Catalysis depends on histidine 65, which acts as the Charge relay system. The N-linked (GlcNAc...) asparagine glycan is linked to asparagine 102. Aspartate 120 (charge relay system) is an active-site residue. Serine 213 serves as the catalytic Charge relay system.

Belongs to the peptidase S1 family. Kallikrein subfamily.

It carries out the reaction Hydrolyzes mouse Ren2 protein (a species of prorenin present in the submandibular gland) on the carboxy side of the arginine residue at the Lys-Arg-|- pair in the N-terminus, to yield mature renin.. In terms of biological role, cleaves REN2 at a dibasic site to yield mature renin. The sequence is that of Epidermal growth factor-binding protein type B (Egfbp2) from Mus musculus (Mouse).